Consider the following 397-residue polypeptide: Tryptophan synthase beta chain (397 aa).

At lysine 90 the chain carries N6-(pyridoxal phosphate)lysine.

Belongs to the TrpB family. Tetramer of two alpha and two beta chains. It depends on pyridoxal 5'-phosphate as a cofactor.

It carries out the reaction (1S,2R)-1-C-(indol-3-yl)glycerol 3-phosphate + L-serine = D-glyceraldehyde 3-phosphate + L-tryptophan + H2O. Its pathway is amino-acid biosynthesis; L-tryptophan biosynthesis; L-tryptophan from chorismate: step 5/5. Functionally, the beta subunit is responsible for the synthesis of L-tryptophan from indole and L-serine. This is Tryptophan synthase beta chain from Nitrosomonas europaea (strain ATCC 19718 / CIP 103999 / KCTC 2705 / NBRC 14298).